Consider the following 430-residue polypeptide: MTTKITLKLNPPHNGRYYTEDDIISGSVVLKLAKATAVKQLRVILKGTSQTMTLAEADRHSSRLPQDPQTQYTKEKSTHILFHQGVQLLPPTGVEDSIKLGQDTYKYGFEFRLAGGPKCVSGHQATSHSFLEDKAHEHYGEQLPPSFNDRHEGGGVTTEELFFYNLGKVRYTVRAEADVATGNKWAPKSPLHDTMVISFLPLQCQAYVENACTSAGSDDTLVNYTALPRTYRAAADVVLSDGLSVTPEVRSNALAYVHRLDYLFRESSGKFGNIFMVFSGDPTKHSVKLTRLVLSLHEKVSFTANGHTNKNLSQLKLMDTPLDDELQLRDLHILEDGSREGKLNLGDHPVLSRLRFNEEDYIHRGNTLFSFTTCNIKREYYFQLDLHWKVDATAVRSEIIVDPVTVYAESAPPAFEGLPPYPEKPPKYEA.

A disordered region spans residues 55–75; it reads AEADRHSSRLPQDPQTQYTKE. Polar residues predominate over residues 63–72; that stretch reads RLPQDPQTQY.

It belongs to the ART10 family.

Its subcellular location is the cytoplasm. May regulate endocytosis by recruiting RSP5 ubiquitin ligase activity to specific plasma membrane proteins in response to extracellular stimuli. This is Arrestin-related trafficking adapter 10 (ART10) from Eremothecium gossypii (strain ATCC 10895 / CBS 109.51 / FGSC 9923 / NRRL Y-1056) (Yeast).